A 38-amino-acid chain; its full sequence is Esterase-5 (38 aa).

A disordered region spans residues 1–38 (SAAADPLIVELPNGKVRGRDNEGYYEAEGIPRAEPPVG).

This sequence belongs to the type-B carboxylesterase/lipase family.

The catalysed reaction is a carboxylic ester + H2O = an alcohol + a carboxylate + H(+). The chain is Esterase-5 (Est-5) from Drosophila mojavensis (Fruit fly).